A 334-amino-acid chain; its full sequence is L-lactate dehydrogenase B chain (334 aa).

N-acetylalanine is present on Ala2. N6-acetyllysine is present on Lys7. Position 44 is a phosphoserine (Ser44). Residues 53–58 and Arg100 contribute to the NAD(+) site; that span reads DVLEDK. The residue at position 58 (Lys58) is an N6-acetyllysine. Residue Arg107 participates in substrate binding. At Lys119 the chain carries N6-acetyllysine. Residue Asn139 coordinates NAD(+). Positions 139 and 170 each coordinate substrate. His194 (proton acceptor) is an active-site residue. Tyr240 carries the post-translational modification Phosphotyrosine. Position 249 (Thr249) interacts with substrate. Lys329 carries the N6-acetyllysine modification.

The protein belongs to the LDH/MDH superfamily. LDH family. Homotetramer. Interacts with PTEN upstream reading frame protein MP31; the interaction leads to inhibition of mitochondrial lactate dehydrogenase activity, preventing conversion of lactate to pyruvate in mitochondria.

The protein localises to the cytoplasm. It localises to the mitochondrion inner membrane. It catalyses the reaction (S)-lactate + NAD(+) = pyruvate + NADH + H(+). Its pathway is fermentation; pyruvate fermentation to lactate; (S)-lactate from pyruvate: step 1/1. In terms of biological role, interconverts simultaneously and stereospecifically pyruvate and lactate with concomitant interconversion of NADH and NAD(+). The polypeptide is L-lactate dehydrogenase B chain (LDHB) (Monodelphis domestica (Gray short-tailed opossum)).